The primary structure comprises 163 residues: Small ribosomal subunit protein uS5 (163 aa).

The region spanning 8–71 is the S5 DRBM domain; the sequence is LIEKIVYLNR…EKARKEMISV (64 aa).

The protein belongs to the universal ribosomal protein uS5 family. As to quaternary structure, part of the 30S ribosomal subunit. Contacts proteins S4 and S8.

Its function is as follows. With S4 and S12 plays an important role in translational accuracy. Located at the back of the 30S subunit body where it stabilizes the conformation of the head with respect to the body. This chain is Small ribosomal subunit protein uS5, found in Maridesulfovibrio salexigens (strain ATCC 14822 / DSM 2638 / NCIMB 8403 / VKM B-1763) (Desulfovibrio salexigens).